The primary structure comprises 602 residues: Elongation factor 4 (602 aa).

The tr-type G domain occupies 8–189 (KNIRNFSIIA…KIITTIPAPS (182 aa)). GTP is bound by residues 20-25 (DHGKST) and 136-139 (NKID).

The protein belongs to the TRAFAC class translation factor GTPase superfamily. Classic translation factor GTPase family. LepA subfamily.

Its subcellular location is the cell inner membrane. The enzyme catalyses GTP + H2O = GDP + phosphate + H(+). Required for accurate and efficient protein synthesis under certain stress conditions. May act as a fidelity factor of the translation reaction, by catalyzing a one-codon backward translocation of tRNAs on improperly translocated ribosomes. Back-translocation proceeds from a post-translocation (POST) complex to a pre-translocation (PRE) complex, thus giving elongation factor G a second chance to translocate the tRNAs correctly. Binds to ribosomes in a GTP-dependent manner. The chain is Elongation factor 4 from Helicobacter pylori (strain ATCC 700392 / 26695) (Campylobacter pylori).